The chain runs to 319 residues: Mitochondrial fission regulator 1-like (319 aa).

The disordered stretch occupies residues 1–35 (MASLGAGAEPESVLFGKDGTEACESPEGRRSGRRK).

Belongs to the MTFR1 family.

Its subcellular location is the mitochondrion outer membrane. In terms of biological role, mitochondrial protein required for adaptation of miochondrial dynamics to metabolic changes. Regulates mitochondrial morphology at steady state and mediates AMPK-dependent stress-induced mitochondrial fragmentation via the control of OPA1 levels. The polypeptide is Mitochondrial fission regulator 1-like (mtfr1l) (Xenopus tropicalis (Western clawed frog)).